The sequence spans 271 residues: Troponin T, fast skeletal muscle (271 aa).

The span at 1-21 (MSDEEVEHVEEEYEEEEEAQE) shows a compositional bias: acidic residues. The tract at residues 1 to 74 (MSDEEVEHVE…EKVDFDDIQK (74 aa)) is disordered. Serine 2 carries the post-translational modification N-acetylserine. At serine 2 the chain carries Phosphoserine. Basic and acidic residues-rich tracts occupy residues 31-53 (PEVH…EKPR) and 62-74 (PEGE…DIQK). The residue at position 90 (serine 90) is a Phosphoserine. Residues 113-155 (RAERAEQQRIRAEKERERQNRLAEEKARREEEDAKRRAEDDLK) are compositionally biased toward basic and acidic residues. The segment at 113 to 194 (RAERAEQQRI…REMKKKVLAE (82 aa)) is disordered. Serine 161, serine 168, and serine 169 each carry phosphoserine. A compositionally biased stretch (basic and acidic residues) spans 183-194 (TAREMKKKVLAE). A Phosphoserine modification is found at serine 205. Tyrosine 221 carries the phosphotyrosine modification. A disordered region spans residues 248 to 271 (IDQAQKHSKKAGTAPKGKVGGRWK).

The protein belongs to the troponin T family.

Functionally, troponin T is the tropomyosin-binding subunit of troponin, the thin filament regulatory complex which confers calcium-sensitivity to striated muscle actomyosin ATPase activity. In Bos taurus (Bovine), this protein is Troponin T, fast skeletal muscle (Tnnt3).